The chain runs to 251 residues: Hydroxyacylglutathione hydrolase (251 aa).

Residues His53, His55, Asp57, His58, His110, Asp127, and His165 each contribute to the Zn(2+) site.

This sequence belongs to the metallo-beta-lactamase superfamily. Glyoxalase II family. As to quaternary structure, monomer. The cofactor is Zn(2+).

The catalysed reaction is an S-(2-hydroxyacyl)glutathione + H2O = a 2-hydroxy carboxylate + glutathione + H(+). It functions in the pathway secondary metabolite metabolism; methylglyoxal degradation; (R)-lactate from methylglyoxal: step 2/2. In terms of biological role, thiolesterase that catalyzes the hydrolysis of S-D-lactoyl-glutathione to form glutathione and D-lactic acid. The chain is Hydroxyacylglutathione hydrolase from Salmonella paratyphi C (strain RKS4594).